A 466-amino-acid chain; its full sequence is Cysteine--tRNA ligase (466 aa).

C28 is a Zn(2+) binding site. The 'HIGH' region motif lies at 30–40 (PTVYNYIHIGN). Zn(2+) contacts are provided by C208, H233, and E237. The 'KMSKS' region signature appears at 265 to 269 (KMSKS). Position 268 (K268) interacts with ATP.

The protein belongs to the class-I aminoacyl-tRNA synthetase family. Monomer. It depends on Zn(2+) as a cofactor.

It localises to the cytoplasm. It carries out the reaction tRNA(Cys) + L-cysteine + ATP = L-cysteinyl-tRNA(Cys) + AMP + diphosphate. The protein is Cysteine--tRNA ligase of Staphylococcus aureus (strain USA300).